The following is a 62-amino-acid chain: Small ribosomal subunit protein bS21 (62 aa).

Residues 43-62 (EKRKRKAMALQKQRKRRSRY) form a disordered region. The span at 44-62 (KRKRKAMALQKQRKRRSRY) shows a compositional bias: basic residues.

It belongs to the bacterial ribosomal protein bS21 family.

This chain is Small ribosomal subunit protein bS21, found in Trichodesmium erythraeum (strain IMS101).